The sequence spans 385 residues: 8-amino-7-oxononanoate synthase (385 aa).

A substrate-binding site is contributed by Arg27. 105–106 (GY) contacts pyridoxal 5'-phosphate. His130 provides a ligand contact to substrate. Pyridoxal 5'-phosphate-binding positions include Ser176, 201-204 (DEAH), and 232-235 (TMSK). The residue at position 235 (Lys235) is an N6-(pyridoxal phosphate)lysine. Residue Thr345 participates in substrate binding.

The protein belongs to the class-II pyridoxal-phosphate-dependent aminotransferase family. BioF subfamily. As to quaternary structure, homodimer. Pyridoxal 5'-phosphate is required as a cofactor.

It catalyses the reaction 6-carboxyhexanoyl-[ACP] + L-alanine + H(+) = (8S)-8-amino-7-oxononanoate + holo-[ACP] + CO2. It participates in cofactor biosynthesis; biotin biosynthesis. Catalyzes the decarboxylative condensation of pimeloyl-[acyl-carrier protein] and L-alanine to produce 8-amino-7-oxononanoate (AON), [acyl-carrier protein], and carbon dioxide. The chain is 8-amino-7-oxononanoate synthase from Mycobacterium leprae (strain Br4923).